Consider the following 90-residue polypeptide: uncharacterized protein (90 aa).

An N-terminal signal peptide occupies residues 1–21 (MFKFSIPLLLFIFLFFSCINS). The segment at 56–90 (SNEKLPERILSGSSGSCSSCSISSSNGSSSRSSKQ) is disordered. A compositionally biased stretch (low complexity) spans 66–90 (SGSSGSCSSCSISSSNGSSSRSSKQ). Residue asparagine 81 is glycosylated (N-linked (GlcNAc...) asparagine).

This is an uncharacterized protein from Dictyostelium discoideum (Social amoeba).